We begin with the raw amino-acid sequence, 622 residues long: Presenilin-A (622 aa).

Residues 1-16 show a composition bias toward basic and acidic residues; it reads MKENEDEINKTDEKYK. Disordered stretches follow at residues 1 to 65 and 132 to 160; these read MKEN…NLEN and VSEQ…DETE. Residues 1 to 168 lie on the Cytoplasmic side of the membrane; sequence MKENEDEINK…TEVPELVDYS (168 aa). The span at 21–62 shows a compositional bias: low complexity; sequence SNNGNNKNKNNNNNNNNNNNNNNNNNNNNNNNNNNNNNGNSN. Positions 147–160 are enriched in acidic residues; that stretch reads DLDEDDDDDDDETE. A helical transmembrane segment spans residues 169 to 189; sequence EMIVSILYPVCITMVIVVLAI. The Lumenal portion of the chain corresponds to 190–227; the sequence is RAISSSTSKNSQIVEISNDNSGGNGDSSSGADKMVFDS. The chain crosses the membrane as a helical span at residues 228 to 248; sequence VVNSLIFLAVIILSTTIMVVL. At 249–265 the chain is on the cytoplasmic side; that stretch reads YKFKLMKALYAWLMGTS. A helical membrane pass occupies residues 266–286; sequence ILLLGVFGGFLFLILLAYLNL. Residues 287–289 lie on the Lumenal side of the membrane; that stretch reads GLD. The chain crosses the membrane as a helical span at residues 290–310; that stretch reads YVTFVIVVWNFSVGGIVCIFW. Residue Tyr-311 is a topological domain, cytoplasmic. Residues 312-332 form a helical membrane-spanning segment; the sequence is SPKLLNQGYLISISVLMALFF. At 333-341 the chain is on the lumenal side; sequence SRLPDWTTW. A helical membrane pass occupies residues 342-362; it reads GILSIVSIYDIFAVLCPGGPL. Asp-351 is a catalytic residue. Topologically, residues 363–538 are cytoplasmic; sequence RILIETAQKR…SYVKPKQSIR (176 aa). A disordered region spans residues 419-477; sequence NNNNNEDENKNNTEDGNNNNNKNKNNNNNNNNRIENENGAENSSENGSITPPPTIPNFI. Low complexity predominate over residues 432-466; it reads EDGNNNNNKNKNNNNNNNNRIENENGAENSSENGS. The helical transmembrane segment at 539–559 threads the bilayer; that stretch reads LGLGDFVFYSVLIGKAASYQI. Asp-543 is a catalytic residue. Residues 560–562 lie on the Lumenal side of the membrane; it reads TTV. Residues 563–583 traverse the membrane as a helical segment; that stretch reads FTVFIAIITGLFLTLILLAVF. Topologically, residues 584 to 588 are cytoplasmic; sequence RRALP. The short motif at 588-590 is the PAL element; the sequence is PAL. An intramembrane region (helical) is located at residues 589–609; the sequence is ALPMSIIFGIIVFFLTFKILI. Residues 610 to 622 lie on the Cytoplasmic side of the membrane; it reads QYIYFLGENQIFV.

Belongs to the peptidase A22A family. As to quaternary structure, homodimer. Component of the gamma-secretase complex, a complex composed of a presenilin homodimer, nicastrin, aph1 and pen2.

It is found in the endoplasmic reticulum membrane. The protein localises to the golgi apparatus membrane. Probable catalytic subunit of the gamma-secretase complex, an endoprotease complex that catalyzes the intramembrane cleavage of integral membrane proteins such as Notch receptors. Requires the other members of the gamma-secretase complex to have a protease activity. This is Presenilin-A (psenA) from Dictyostelium discoideum (Social amoeba).